A 427-amino-acid polypeptide reads, in one-letter code: Enolase (427 aa).

Q163 serves as a coordination point for (2R)-2-phosphoglycerate. E205 acts as the Proton donor in catalysis. 3 residues coordinate Mg(2+): D242, E285, and D312. The (2R)-2-phosphoglycerate site is built by K337, R366, S367, and K388. Residue K337 is the Proton acceptor of the active site.

It belongs to the enolase family. Mg(2+) is required as a cofactor.

It is found in the cytoplasm. The protein localises to the secreted. It localises to the cell surface. It carries out the reaction (2R)-2-phosphoglycerate = phosphoenolpyruvate + H2O. It functions in the pathway carbohydrate degradation; glycolysis; pyruvate from D-glyceraldehyde 3-phosphate: step 4/5. Functionally, catalyzes the reversible conversion of 2-phosphoglycerate (2-PG) into phosphoenolpyruvate (PEP). It is essential for the degradation of carbohydrates via glycolysis. The chain is Enolase from Leptothrix cholodnii (strain ATCC 51168 / LMG 8142 / SP-6) (Leptothrix discophora (strain SP-6)).